A 158-amino-acid chain; its full sequence is Protein EOLA2 (158 aa).

The ASCH domain occupies 6–92; that stretch reads LSFRQPYAGF…IAGLVDIGET (87 aa).

It belongs to the EOLA family.

In Homo sapiens (Human), this protein is Protein EOLA2.